Consider the following 517-residue polypeptide: Crotonobetaine/carnitine--CoA ligase (517 aa).

The protein belongs to the ATP-dependent AMP-binding enzyme family.

The catalysed reaction is 4-(trimethylamino)butanoate + ATP + CoA = 4-(trimethylamino)butanoyl-CoA + AMP + diphosphate. The enzyme catalyses crotonobetaine + ATP + CoA = crotonobetainyl-CoA + AMP + diphosphate. It carries out the reaction (R)-carnitine + ATP + CoA = (R)-carnitinyl-CoA + AMP + diphosphate. The protein operates within amine and polyamine metabolism; carnitine metabolism. Catalyzes the transfer of CoA to carnitine, generating the initial carnitinyl-CoA needed for the CaiB reaction cycle. Also has activity toward crotonobetaine and gamma-butyrobetaine. The protein is Crotonobetaine/carnitine--CoA ligase of Escherichia coli O45:K1 (strain S88 / ExPEC).